Here is a 736-residue protein sequence, read N- to C-terminus: Phosphoribosylformylglycinamidine synthase subunit PurL (736 aa).

His-50 is a catalytic residue. Tyr-53 and Lys-92 together coordinate ATP. Glu-94 is a binding site for Mg(2+). Residues 95-98 and Arg-117 contribute to the substrate site; that span reads SHNH. His-96 acts as the Proton acceptor in catalysis. Asp-118 contacts Mg(2+). Residue Gln-241 participates in substrate binding. Asp-269 lines the Mg(2+) pocket. Substrate is bound at residue 313 to 315; the sequence is ESQ. Positions 495 and 532 each coordinate ATP. Asn-533 contributes to the Mg(2+) binding site. Substrate is bound at residue Ser-535.

This sequence belongs to the FGAMS family. Monomer. Part of the FGAM synthase complex composed of 1 PurL, 1 PurQ and 2 PurS subunits.

The protein localises to the cytoplasm. The enzyme catalyses N(2)-formyl-N(1)-(5-phospho-beta-D-ribosyl)glycinamide + L-glutamine + ATP + H2O = 2-formamido-N(1)-(5-O-phospho-beta-D-ribosyl)acetamidine + L-glutamate + ADP + phosphate + H(+). It participates in purine metabolism; IMP biosynthesis via de novo pathway; 5-amino-1-(5-phospho-D-ribosyl)imidazole from N(2)-formyl-N(1)-(5-phospho-D-ribosyl)glycinamide: step 1/2. In terms of biological role, part of the phosphoribosylformylglycinamidine synthase complex involved in the purines biosynthetic pathway. Catalyzes the ATP-dependent conversion of formylglycinamide ribonucleotide (FGAR) and glutamine to yield formylglycinamidine ribonucleotide (FGAM) and glutamate. The FGAM synthase complex is composed of three subunits. PurQ produces an ammonia molecule by converting glutamine to glutamate. PurL transfers the ammonia molecule to FGAR to form FGAM in an ATP-dependent manner. PurS interacts with PurQ and PurL and is thought to assist in the transfer of the ammonia molecule from PurQ to PurL. The chain is Phosphoribosylformylglycinamidine synthase subunit PurL from Bartonella tribocorum (strain CIP 105476 / IBS 506).